Reading from the N-terminus, the 197-residue chain is NADH-quinone oxidoreductase subunit I 2 (197 aa).

4Fe-4S ferredoxin-type domains lie at 42 to 71 and 91 to 120; these read GVIG…IDSH and DRFA…WSPE. 8 residues coordinate [4Fe-4S] cluster: Cys51, Cys54, Cys57, Cys61, Cys100, Cys103, Cys106, and Cys110. Positions 147-197 are disordered; it reads APPALDPGAEEPKELAAARKAADKLAAQQQPDQPGPDHPGQPDESGQEGRT. Over residues 156–169 the composition is skewed to basic and acidic residues; it reads EEPKELAAARKAAD.

Belongs to the complex I 23 kDa subunit family. NDH-1 is composed of 14 different subunits. Subunits NuoA, H, J, K, L, M, N constitute the membrane sector of the complex. It depends on [4Fe-4S] cluster as a cofactor.

The protein resides in the cell membrane. The catalysed reaction is a quinone + NADH + 5 H(+)(in) = a quinol + NAD(+) + 4 H(+)(out). In terms of biological role, NDH-1 shuttles electrons from NADH, via FMN and iron-sulfur (Fe-S) centers, to quinones in the respiratory chain. The immediate electron acceptor for the enzyme in this species is believed to be ubiquinone. Couples the redox reaction to proton translocation (for every two electrons transferred, four hydrogen ions are translocated across the cytoplasmic membrane), and thus conserves the redox energy in a proton gradient. The protein is NADH-quinone oxidoreductase subunit I 2 of Streptomyces coelicolor (strain ATCC BAA-471 / A3(2) / M145).